A 633-amino-acid polypeptide reads, in one-letter code: DNA repair protein XRCC1 (633 aa).

Phosphoserine is present on Ser-140. Residue Lys-176 forms a Glycyl lysine isopeptide (Lys-Gly) (interchain with G-Cter in SUMO1); alternate linkage. Residue Lys-176 forms a Glycyl lysine isopeptide (Lys-Gly) (interchain with G-Cter in SUMO2); alternate linkage. Thr-198 carries the phosphothreonine modification. Ser-199 carries the phosphoserine modification. Phosphothreonine is present on Thr-202. A phosphoserine mark is found at Ser-204, Ser-226, and Ser-241. Over residues 221–231 the composition is skewed to low complexity; that stretch reads AASSASPVSRA. The tract at residues 221–313 is disordered; that stretch reads AASSASPVSR…TEPRRPRAGP (93 aa). Residues 240–257 show a composition bias toward basic and acidic residues; sequence ESPKGKRKLDLNQEEKKT. The residue at position 257 (Thr-257) is a Phosphothreonine. Residues Ser-259 and Ser-266 each carry the phosphoserine modification. Over residues 277 to 291 the composition is skewed to low complexity; it reads APTRTPATAPVPARA. Phosphothreonine is present on Thr-281. A compositionally biased stretch (basic and acidic residues) spans 299–313; that stretch reads PRGEGTEPRRPRAGP. One can recognise a BRCT 1 domain in the interval 315-403; that stretch reads ELGKILQGVV…RRLPSQRYLM (89 aa). Ser-371 is modified (phosphoserine; by PRKDC). Disordered stretches follow at residues 400 to 462, 471 to 490, and 498 to 536; these read RYLM…AASP, EGVQ…DTED, and QKEH…DLPV. Phosphoserine is present on residues Ser-408, Ser-409, Ser-410, and Ser-421. Over residues 427 to 443 the composition is skewed to low complexity; that stretch reads KLPQKQPQTKTKPTQAA. Phosphoserine is present on residues Ser-446 and Ser-447. Phosphothreonine occurs at positions 453 and 457. Phosphoserine is present on residues Ser-461 and Ser-485. A compositionally biased stretch (acidic residues) spans 481–490; it reads GAEDSGDTED. Thr-488 carries the phosphothreonine modification. Phosphoserine is present on Ser-518. 2 positions are modified to phosphothreonine: Thr-519 and Thr-523. Residues 538–629 form the BRCT 2 domain; sequence ELPDFFQGKH…KLLPHQLYGV (92 aa).

Homodimer. Interacts with polynucleotide kinase (PNK), DNA polymerase-beta (POLB) and DNA ligase III (LIG3). Interacts with APTX and APLF. Interacts with APEX1; the interaction is induced by SIRT1 and increases with the acetylated form of APEX1. Interacts with (poly-ADP-ribosylated) PARP1. Phosphorylation of Ser-371 causes dimer dissociation. Phosphorylation by CK2 promotes interaction with APTX and APLF. In terms of processing, sumoylated. As to expression, expressed in fibroblasts, retinal pigmented epithelial cells and lymphoblastoid cells (at protein level).

It localises to the nucleus. The protein localises to the chromosome. Scaffold protein involved in DNA single-strand break repair by mediating the assembly of DNA break repair protein complexes. Negatively regulates ADP-ribosyltransferase activity of PARP1 during base-excision repair in order to prevent excessive PARP1 activity. Recognizes and binds poly-ADP-ribose chains: specifically binds auto-poly-ADP-ribosylated PARP1, limiting its activity. The sequence is that of DNA repair protein XRCC1 from Homo sapiens (Human).